Here is a 182-residue protein sequence, read N- to C-terminus: Large ribosomal subunit protein uL5 (182 aa).

The protein belongs to the universal ribosomal protein uL5 family. As to quaternary structure, part of the 50S ribosomal subunit; part of the 5S rRNA/L5/L18/L25 subcomplex. Contacts the 5S rRNA and the P site tRNA. Forms a bridge to the 30S subunit in the 70S ribosome.

This is one of the proteins that bind and probably mediate the attachment of the 5S RNA into the large ribosomal subunit, where it forms part of the central protuberance. In the 70S ribosome it contacts protein S13 of the 30S subunit (bridge B1b), connecting the 2 subunits; this bridge is implicated in subunit movement. Contacts the P site tRNA; the 5S rRNA and some of its associated proteins might help stabilize positioning of ribosome-bound tRNAs. The protein is Large ribosomal subunit protein uL5 of Nostoc sp. (strain PCC 7120 / SAG 25.82 / UTEX 2576).